Reading from the N-terminus, the 253-residue chain is Tetraspanin-3 (253 aa).

Residues 1–11 (MGQCGITSSKT) are Cytoplasmic-facing. A helical transmembrane segment spans residues 12–32 (VLVFLNLIFWGAAGILCYVGA). Over 33 to 50 (YVFITYDDYDHFFEDVYT) the chain is Extracellular. A helical transmembrane segment spans residues 51-71 (LIPAVVIIAVGALLFIIGLIG). Residues 72-85 (CCATIRESRCGLAT) lie on the Cytoplasmic side of the membrane. The chain crosses the membrane as a helical span at residues 86–106 (FVIILLLVFVTEVVVVVLGYV). At 107-212 (YRAKVENEVD…KKLQEIMMHV (106 aa)) the chain is on the extracellular side. 4 N-linked (GlcNAc...) asparagine glycosylation sites follow: Asn-127, Asn-152, Asn-167, and Asn-183. Residues 213–233 (IWAALAFAAIQLLGMLCACIV) traverse the membrane as a helical segment. At 234 to 253 (LCRRSRDPAYELLITGGAYA) the chain is on the cytoplasmic side.

This sequence belongs to the tetraspanin (TM4SF) family. As to quaternary structure, interacts with claudin-11/CLDN11 and integrins.

The protein localises to the membrane. Its function is as follows. Regulates the proliferation and migration of oligodendrocytes, a process essential for normal myelination and repair. This is Tetraspanin-3 (TSPAN3) from Bos taurus (Bovine).